We begin with the raw amino-acid sequence, 292 residues long: Cyclin-dependent kinase 5 (292 aa).

The 283-residue stretch at 4-286 (YEKLEKIGEG…AEEALQHPYF (283 aa)) folds into the Protein kinase domain. Residues 10–18 (IGEGTYGTV) and Lys-33 contribute to the ATP site. A Phosphotyrosine; by ABL1, EPHA4 and FYN modification is found at Tyr-15. Thr-17 bears the Phosphothreonine mark. Lys-56 bears the N6-acetyllysine mark. The residue at position 72 (Ser-72) is a Phosphoserine. Asp-126 functions as the Proton acceptor in the catalytic mechanism. Residue Ser-159 is modified to Phosphoserine.

The protein belongs to the protein kinase superfamily. CMGC Ser/Thr protein kinase family. CDC2/CDKX subfamily. Heterodimer composed of a catalytic subunit CDK5 and a regulatory subunit CDK5R1 (p25) and macromolecular complex composed of at least CDK5, CDK5R1 (p35) and CDK5RAP1 or CDK5RAP2 or CDK5RAP3. Only the heterodimer shows kinase activity. Under neurotoxic stress and neuronal injury conditions, p35 is cleaved by calpain to generate p25 that hyperactivates CDK5, that becomes functionally disabled and often toxic. Found in a trimolecular complex with CABLES1 and ABL1. Interacts with CABLES1 and CABLES2. Interacts with AATK and GSTP1. Binds to HDAC1 when in complex with p25. Interaction with myristoylation p35 promotes CDK5 association with membranes. Both isoforms 1 and 2 interacts with beta-catenin/CTNNB1. Interacts with delta-catenin/CTNND2 and APEX1. Interacts with P53/TP53 in neurons. Interacts with PTK2/FAK1. Interacts with EPHA4; may mediate the activation of NGEF by EPHA4. The complex p35/CDK5 interacts with CLOCK. Interacts with HTR6. Phosphorylation on Tyr-15 by ABL1 and FYN, and on Ser-159 by casein kinase 1 promotes kinase activity. By contrast, phosphorylation at Thr-14 inhibits activity. Post-translationally, phosphorylation at Ser-159 is essential for maximal catalytic activity. In terms of tissue distribution, expressed in hippocampal neuronal synaptic termini (at protein level). Expressed predominantly in post-mitotic neurons of the central and peripheral nervous system.

The protein resides in the cytoplasm. It localises to the nucleus. The protein localises to the cell membrane. Its subcellular location is the perikaryon. It is found in the cell projection. The protein resides in the lamellipodium. It localises to the growth cone. The protein localises to the postsynaptic density. Its subcellular location is the synapse. It carries out the reaction L-seryl-[protein] + ATP = O-phospho-L-seryl-[protein] + ADP + H(+). It catalyses the reaction L-threonyl-[protein] + ATP = O-phospho-L-threonyl-[protein] + ADP + H(+). With respect to regulation, inhibited by 2-(1-ethyl-2-hydroxyethylamino)-6-benzylamino-9-isopropylpurine (roscovitine), 1-isopropyl-4-aminobenzyl-6-ether-linked benzimidazoles, resveratrol, AT-7519 and olomoucine. Activated by CDK5R1 (p35) and CDK5R2 (p39) during the development of the nervous system; degradation of CDK5R1 (p35) and CDK5R2 (p39) by proteasome result in down regulation of kinase activity, during this process, CDK5 phosphorylates p35 and induces its ubiquitination and subsequent degradation. Kinase activity is mainly determined by the amount of p35 available and subcellular location; reversible association to plasma membrane inhibits activity. Long-term inactivation as well as CDK5R1 (p25)-mediated hyperactivation of CDK5 triggers cell death. The pro-death activity of hyperactivated CDK5 is suppressed by membrane association of CDK5, via myristoylation of p35. Brain-derived neurotrophic factor, glial-derived neurotrophic factor, nerve growth factor (NGF), retinoic acid, laminin and neuregulin promote activity. Neurotoxicity enhances nuclear activity, thus leading to MEF2 phosphorylation and inhibition prior to apoptosis of cortical neurons. Repression by GSTP1 via p25/p35 translocation prevents neurodegeneration. In terms of biological role, proline-directed serine/threonine-protein kinase essential for neuronal cell cycle arrest and differentiation and may be involved in apoptotic cell death in neuronal diseases by triggering abortive cell cycle re-entry. Interacts with D1 and D3-type G1 cyclins. Phosphorylates SRC, NOS3, VIM/vimentin, p35/CDK5R1, MEF2A, SIPA1L1, SH3GLB1, PXN, PAK1, MCAM/MUC18, SEPT5, SYN1, DNM1, AMPH, SYNJ1, CDK16, RAC1, RHOA, CDC42, TONEBP/NFAT5, MAPT/TAU, MAP1B, histone H1, p53/TP53, HDAC1, APEX1, PTK2/FAK1, huntingtin/HTT, ATM, MAP2, NEFH and NEFM. Regulates several neuronal development and physiological processes including neuronal survival, migration and differentiation, axonal and neurite growth, synaptogenesis, oligodendrocyte differentiation, synaptic plasticity and neurotransmission, by phosphorylating key proteins. Negatively regulates the CACNA1B/CAV2.2 -mediated Ca(2+) release probability at hippocampal neuronal soma and synaptic terminals. Activated by interaction with CDK5R1 (p35) and CDK5R2 (p39), especially in postmitotic neurons, and promotes CDK5R1 (p35) expression in an autostimulation loop. Phosphorylates many downstream substrates such as Rho and Ras family small GTPases (e.g. PAK1, RAC1, RHOA, CDC42) or microtubule-binding proteins (e.g. MAPT/TAU, MAP2, MAP1B), and modulates actin dynamics to regulate neurite growth and/or spine morphogenesis. Also phosphorylates exocytosis associated proteins such as MCAM/MUC18, SEPT5, SYN1, and CDK16/PCTAIRE1 as well as endocytosis associated proteins such as DNM1, AMPH and SYNJ1 at synaptic terminals. In the mature central nervous system (CNS), regulates neurotransmitter movements by phosphorylating substrates associated with neurotransmitter release and synapse plasticity; synaptic vesicle exocytosis, vesicles fusion with the presynaptic membrane, and endocytosis. Promotes cell survival by activating anti-apoptotic proteins BCL2 and STAT3, and negatively regulating of JNK3/MAPK10 activity. Phosphorylation of p53/TP53 in response to genotoxic and oxidative stresses enhances its stabilization by preventing ubiquitin ligase-mediated proteasomal degradation, and induces transactivation of p53/TP53 target genes, thus regulating apoptosis. Phosphorylation of p35/CDK5R1 enhances its stabilization by preventing calpain-mediated proteolysis producing p25/CDK5R1 and avoiding ubiquitin ligase-mediated proteasomal degradation. During aberrant cell-cycle activity and DNA damage, p25/CDK5 activity elicits cell-cycle activity and double-strand DNA breaks that precedes neuronal death by deregulating HDAC1. DNA damage triggered phosphorylation of huntingtin/HTT in nuclei of neurons protects neurons against polyglutamine expansion as well as DNA damage mediated toxicity. Phosphorylation of PXN reduces its interaction with PTK2/FAK1 in matrix-cell focal adhesions (MCFA) during oligodendrocytes (OLs) differentiation. Negative regulator of Wnt/beta-catenin signaling pathway. Activator of the GAIT (IFN-gamma-activated inhibitor of translation) pathway, which suppresses expression of a post-transcriptional regulon of proinflammatory genes in myeloid cells; phosphorylates the linker domain of glutamyl-prolyl tRNA synthetase (EPRS) in a IFN-gamma-dependent manner, the initial event in assembly of the GAIT complex. Phosphorylation of SH3GLB1 is required for autophagy induction in starved neurons. Phosphorylation of TONEBP/NFAT5 in response to osmotic stress mediates its rapid nuclear localization. MEF2 is inactivated by phosphorylation in nucleus in response to neurotoxin, thus leading to neuronal apoptosis. APEX1 AP-endodeoxyribonuclease is repressed by phosphorylation, resulting in accumulation of DNA damage and contributing to neuronal death. NOS3 phosphorylation down regulates NOS3-derived nitrite (NO) levels. SRC phosphorylation mediates its ubiquitin-dependent degradation and thus leads to cytoskeletal reorganization. May regulate endothelial cell migration and angiogenesis via the modulation of lamellipodia formation. Involved in dendritic spine morphogenesis by mediating the EFNA1-EPHA4 signaling. The complex p35/CDK5 participates in the regulation of the circadian clock by modulating the function of CLOCK protein: phosphorylates CLOCK at 'Thr-451' and 'Thr-461' and regulates the transcriptional activity of the CLOCK-BMAL1 heterodimer in association with altered stability and subcellular distribution. The polypeptide is Cyclin-dependent kinase 5 (Rattus norvegicus (Rat)).